Here is a 40-residue protein sequence, read N- to C-terminus: Bomanin Short 6 (40 aa).

Residues 1-18 (MKLLSITFLFGLLALASA) form the signal peptide. Positions 19 to 23 (NPLSP) are cleaved as a propeptide — removed by a dipeptidylpeptidase. A disulfide bond links cysteine 32 and cysteine 35.

Belongs to the bomanin family.

Its subcellular location is the secreted. Secreted immune-induced peptide induced by Toll signaling. Has a role in resistance to bacterial and fungal infections. The strength of antimicrobial activity appears to correlate with the overall level of expression. The protein is Bomanin Short 6 of Drosophila melanogaster (Fruit fly).